Consider the following 362-residue polypeptide: 3-dehydroquinate synthase (362 aa).

NAD(+) is bound by residues 70 to 75, 104 to 108, 128 to 129, lysine 141, lysine 150, and 168 to 171; these read EGEQYK, GVIGD, TT, and TLTT. The Zn(2+) site is built by glutamate 183, histidine 246, and histidine 263.

The protein belongs to the sugar phosphate cyclases superfamily. Dehydroquinate synthase family. Requires Co(2+) as cofactor. The cofactor is Zn(2+). NAD(+) serves as cofactor.

The protein localises to the cytoplasm. The enzyme catalyses 7-phospho-2-dehydro-3-deoxy-D-arabino-heptonate = 3-dehydroquinate + phosphate. It functions in the pathway metabolic intermediate biosynthesis; chorismate biosynthesis; chorismate from D-erythrose 4-phosphate and phosphoenolpyruvate: step 2/7. Catalyzes the conversion of 3-deoxy-D-arabino-heptulosonate 7-phosphate (DAHP) to dehydroquinate (DHQ). The polypeptide is 3-dehydroquinate synthase (Histophilus somni (strain 2336) (Haemophilus somnus)).